Reading from the N-terminus, the 372-residue chain is 4-hydroxy-3-methylbut-2-en-1-yl diphosphate synthase (flavodoxin) (372 aa).

The [4Fe-4S] cluster site is built by Cys-270, Cys-273, Cys-305, and Glu-312.

The protein belongs to the IspG family. [4Fe-4S] cluster is required as a cofactor.

The enzyme catalyses (2E)-4-hydroxy-3-methylbut-2-enyl diphosphate + oxidized [flavodoxin] + H2O + 2 H(+) = 2-C-methyl-D-erythritol 2,4-cyclic diphosphate + reduced [flavodoxin]. The protein operates within isoprenoid biosynthesis; isopentenyl diphosphate biosynthesis via DXP pathway; isopentenyl diphosphate from 1-deoxy-D-xylulose 5-phosphate: step 5/6. In terms of biological role, converts 2C-methyl-D-erythritol 2,4-cyclodiphosphate (ME-2,4cPP) into 1-hydroxy-2-methyl-2-(E)-butenyl 4-diphosphate. This is 4-hydroxy-3-methylbut-2-en-1-yl diphosphate synthase (flavodoxin) from Aliivibrio fischeri (strain ATCC 700601 / ES114) (Vibrio fischeri).